Consider the following 336-residue polypeptide: Polyprenyl transferase dpasC (336 aa).

A helical transmembrane segment spans residues 34-54; it reads LFTIFAGGMFLFVASFPTTAF. N-linked (GlcNAc...) asparagine glycosylation occurs at asparagine 66. 7 consecutive transmembrane segments (helical) span residues 80 to 100, 125 to 145, 181 to 201, 205 to 225, 253 to 273, 274 to 294, and 311 to 331; these read ALCLSACYSFCGAGMVWNDWI, QAMLWMVFQMAVSWWLLHFML, YILGFTIAWPAVPGRTAIFHG, FAESVQACMPLLNMVFFWTIF, HVHLLLCLLLVPVAVCVPMYL, NQFHSTWLWVSWAGVWALSLL, and LHVDNFLLGAWTVVACTIELL.

It belongs to the UbiA prenyltransferase family. Mg(2+) is required as a cofactor.

The protein localises to the membrane. It participates in secondary metabolite biosynthesis; terpenoid biosynthesis. Polyprenyl transferase; part of the gene cluster that mediates the biosynthesis of the diterpenoid pyrones subglutinols A and B. The first step of the pathway is the synthesis of the alpha-pyrone moiety by the polyketide synthase dpasA via condensation of one acetyl-CoA starter unit with 3 malonyl-CoA units and 2 methylations. The alpha-pyrone is then combined with geranylgeranyl pyrophosphate (GGPP) formed by the GGPP synthase dpasD through the action of the prenyltransferase dpasC to yield a linear alpha-pyrone diterpenoid. Subsequent steps in the diterpenoid pyrone biosynthetic pathway involve the decalin core formation, which is initiated by the epoxidation of the C10-C11 olefin by the FAD-dependent oxidoreductase dpasE, and is followed by a cyclization cascade catalyzed by the terpene cyclase dpasB. The FAD-linked oxidoreductase dpasF is then involved in tetrahydrofuran (THF) ring formation at the C5 unit to complete the formation of subglutinols A and B. DpasF possesses also an additional catalytic ability of multi-step oxidations to generate a new DDP analog with an enone system at the C5 named FDDP A. In Apiospora sacchari (Arthrinium sacchari), this protein is Polyprenyl transferase dpasC.